Here is a 663-residue protein sequence, read N- to C-terminus: Bicarbonate transport ATP-binding protein CmpC (663 aa).

In terms of domain architecture, ABC transporter spans 5 to 239; the sequence is VAVENIEKSF…RPRKRMDVVH (235 aa). 42 to 49 lines the ATP pocket; the sequence is GHSGCGKS. Residues 281 to 663 form a cmpA-like region; that stretch reads LEIGYVPLMA…LDQPRPIAAA (383 aa).

Belongs to the ABC transporter superfamily. Nitrate/nitrite/cyanate uptake transporter (NitT) (TC 3.A.1.16) family. In terms of assembly, the complex is composed of two ATP-binding proteins (CmpC and CmpD), a transmembrane protein (CmpB) and a solute-binding protein (CmpA).

It is found in the cell inner membrane. Functionally, part of the ABC transporter complex CmpABCD involved in bicarbonate transport. Responsible for energy coupling to the transport system. The sequence is that of Bicarbonate transport ATP-binding protein CmpC (cmpC) from Synechococcus elongatus (strain ATCC 33912 / PCC 7942 / FACHB-805) (Anacystis nidulans R2).